The following is a 172-amino-acid chain: NADH-ubiquinone oxidoreductase chain 6 (172 aa).

5 helical membrane passes run methionine 1–serine 21, tyrosine 27–glycine 47, isoleucine 48–valine 68, valine 87–phenylalanine 107, and cysteine 138–leucine 158.

The protein belongs to the complex I subunit 6 family.

It localises to the mitochondrion membrane. It catalyses the reaction a ubiquinone + NADH + 5 H(+)(in) = a ubiquinol + NAD(+) + 4 H(+)(out). Core subunit of the mitochondrial membrane respiratory chain NADH dehydrogenase (Complex I) that is believed to belong to the minimal assembly required for catalysis. Complex I functions in the transfer of electrons from NADH to the respiratory chain. The immediate electron acceptor for the enzyme is believed to be ubiquinone. In Uria aalge (Common mure), this protein is NADH-ubiquinone oxidoreductase chain 6 (MT-ND6).